Here is a 385-residue protein sequence, read N- to C-terminus: Putative nickel insertion protein (385 aa).

Belongs to the LarC family.

This is Putative nickel insertion protein from Citrifermentans bemidjiense (strain ATCC BAA-1014 / DSM 16622 / JCM 12645 / Bem) (Geobacter bemidjiensis).